A 524-amino-acid polypeptide reads, in one-letter code: Phosphoenolpyruvate carboxykinase (ATP) (524 aa).

The substrate site is built by R52, Y188, and K194. ATP is bound by residues K194, H213, and 229-237 (GLSGTGKTT). K194 and H213 together coordinate Mn(2+). D250 provides a ligand contact to Mn(2+). E278, R314, and T439 together coordinate ATP. R314 lines the substrate pocket.

The protein belongs to the phosphoenolpyruvate carboxykinase (ATP) family. Mn(2+) is required as a cofactor.

The protein localises to the cytoplasm. The enzyme catalyses oxaloacetate + ATP = phosphoenolpyruvate + ADP + CO2. It functions in the pathway carbohydrate biosynthesis; gluconeogenesis. Involved in the gluconeogenesis. Catalyzes the conversion of oxaloacetate (OAA) to phosphoenolpyruvate (PEP) through direct phosphoryl transfer between the nucleoside triphosphate and OAA. This is Phosphoenolpyruvate carboxykinase (ATP) from Campylobacter jejuni subsp. jejuni serotype O:2 (strain ATCC 700819 / NCTC 11168).